A 758-amino-acid polypeptide reads, in one-letter code: Dachshund homolog 1 (758 aa).

Disordered stretches follow at residues 1–105 (MAVP…SNCN) and 134–185 (INAS…TPQN). Low complexity predominate over residues 20–53 (ISTSASSSGTTTSTSSATSSPAPSIGPPASSGPT). A compositionally biased stretch (gly residues) spans 73-102 (TGGGGGGGGSGGGGGSSGNGGGGGGGGGGS). Residues 140 to 163 (SSSSSSSSSSSSSSSSSSSSSSSS) show a composition bias toward low complexity. Residues 174 to 185 (STPSPVENTPQN) show a composition bias toward polar residues. Positions 189-275 (KMVDLRGAKV…LISRKDFETL (87 aa)) are DACHbox-N. Residues 189 to 384 (KMVDLRGAKV…VGSSDGSWDK (196 aa)) form an interaction with SIX6 and HDAC3 region. Disordered stretches follow at residues 280-302 (TNAS…PENS), 358-414 (SNNQ…PLSH), 474-532 (SPPS…RIPV), and 544-564 (MGLS…GHDM). Polar residues-rich tracts occupy residues 292–301 (RTQSVTSPEN), 358–380 (SNNQ…SSDG), and 387–399 (LPSS…QASI). Residue Ser491 is modified to Phosphoserine. Residues 506–524 (SHPSSHRSSSVSSSPARTE) are compositionally biased toward low complexity. Positions 555-564 (KEGDLAGHDM) are enriched in basic and acidic residues. The DACHbox-C stretch occupies residues 616 to 696 (SSIETLLTNI…KAKRKLQEAL (81 aa)). Residues 627–706 (GLLKVAIDNA…EFETKRREQA (80 aa)) are interaction with SIN3A. Residues 630–718 (KVAIDNARAQ…TLKQAASTDS (89 aa)) are a coiled coil.

This sequence belongs to the DACH/dachshund family. In terms of assembly, interacts with SIX1, SIX6 and EYA3. Interacts with NCOR1 and HDAC3 through its N-terminus. Interacts with SIN3A through its C-terminus. Interacts with SMAD3 and SMAD4. Widely expressed. Isoform 2 is found in brain, heart, kidney, liver, leukocytes and spleen. Isoform 3 is found in liver and heart. Isoform 4 is found in spleen.

The protein resides in the nucleus. Functionally, transcription factor that is involved in regulation of organogenesis. Seems to be a regulator of SIX1, SIX6 and probably SIX5. Corepression of precursor cell proliferation in myoblasts by SIX1 is switched to coactivation through recruitment of EYA3 to the SIX1-DACH1 complex. Transcriptional activation also seems to involve association of CREBBP. Seems to act as a corepressor of SIX6 in regulating proliferation by directly repressing cyclin-dependent kinase inhibitors, including the p27Kip1 promoter. Inhibits TGF-beta signaling through interaction with SMAD4 and NCOR1. Binds to chromatin DNA via its DACHbox-N domain. The sequence is that of Dachshund homolog 1 (DACH1) from Homo sapiens (Human).